A 104-amino-acid polypeptide reads, in one-letter code: Large ribosomal subunit protein bL21 (104 aa).

It belongs to the bacterial ribosomal protein bL21 family. As to quaternary structure, part of the 50S ribosomal subunit. Contacts protein L20.

In terms of biological role, this protein binds to 23S rRNA in the presence of protein L20. The sequence is that of Large ribosomal subunit protein bL21 from Thermodesulfovibrio yellowstonii (strain ATCC 51303 / DSM 11347 / YP87).